Here is a 202-residue protein sequence, read N- to C-terminus: 3-isopropylmalate dehydratase small subunit (202 aa).

It belongs to the LeuD family. LeuD type 1 subfamily. In terms of assembly, heterodimer of LeuC and LeuD.

The enzyme catalyses (2R,3S)-3-isopropylmalate = (2S)-2-isopropylmalate. Its pathway is amino-acid biosynthesis; L-leucine biosynthesis; L-leucine from 3-methyl-2-oxobutanoate: step 2/4. Catalyzes the isomerization between 2-isopropylmalate and 3-isopropylmalate, via the formation of 2-isopropylmaleate. This Nocardioides sp. (strain ATCC BAA-499 / JS614) protein is 3-isopropylmalate dehydratase small subunit.